Consider the following 642-residue polypeptide: Mini-chromosome maintenance complex-binding protein (642 aa).

A compositionally biased stretch (polar residues) spans 151–161 (ARVSPSTSYTP). Positions 151–196 (ARVSPSTSYTPSRHKRSYEDDEDMDLQPSKQKEQHPGSRQAGGLGG) are disordered. Position 154 is a phosphoserine (Ser154). Thr160 carries the post-translational modification Phosphothreonine. 2 positions are modified to phosphoserine: Ser167 and Ser298.

The protein belongs to the MCMBP family. In terms of assembly, interacts with the MCM complex: associates with the MCM3-7 complex which lacks MCM2, while it does not interact with the MCM complex when MCM2 is present (MCM2-7 complex). Interacts with the RPA complex, when composed of all RPA1, RPA2 and RPA3 components, but not with RPA1 or RPA2 alone.

It is found in the nucleus. Functionally, associated component of the MCM complex that acts as a regulator of DNA replication. Binds to the MCM complex during late S phase and promotes the disassembly of the MCM complex from chromatin, thereby acting as a key regulator of pre-replication complex (pre-RC) unloading from replicated DNA. Can dissociate the MCM complex without addition of ATP; probably acts by destabilizing interactions of each individual subunits of the MCM complex. Required for sister chromatid cohesion. The chain is Mini-chromosome maintenance complex-binding protein (Mcmbp) from Mus musculus (Mouse).